A 145-amino-acid polypeptide reads, in one-letter code: Bacilliredoxin BrxB (145 aa).

Catalysis depends on nucleophile residues Cys-52 and Cys-54. Cys-52 is modified (S-bacillithiol cysteine disulfide). Residues 52 to 54 carry the CXC active site motif motif; the sequence is CGC. Cys-52 and Cys-54 are joined by a disulfide.

Belongs to the bacilliredoxin family. As to quaternary structure, interacts with BrxC. Post-translationally, N-terminal Cys of the CXC active site motif can react with bacillithiol (BSH) to form mixed disulfides. S-bacillithiolation protects Cys residues against overoxidation by acting as a redox switch in response to oxidative stress.

In terms of biological role, S-bacillithiolation is the formation of mixed disulfide bonds between protein thiols and the general thiol reductant bacillithiol (BSH) under oxidative stress. BSH is an equivalent of glutathione (GSH) in Firmicutes. This protein is a dithiol bacilliredoxin, which debacillithiolates (removes BSH) the S-bacillithiolated OhrR (OhrR-SSB) in vitro and in vivo NaOCl-generated S-bacillithiolated MetE (MetE-SSB). Involved in maintaining redox homeostasis in response to disulfide stress conditions. The protein is Bacilliredoxin BrxB of Bacillus subtilis (strain 168).